The primary structure comprises 102 residues: Large ribosomal subunit protein uL24 (102 aa).

Belongs to the universal ribosomal protein uL24 family. Part of the 50S ribosomal subunit.

Functionally, one of two assembly initiator proteins, it binds directly to the 5'-end of the 23S rRNA, where it nucleates assembly of the 50S subunit. One of the proteins that surrounds the polypeptide exit tunnel on the outside of the subunit. The protein is Large ribosomal subunit protein uL24 of Macrococcus caseolyticus (strain JCSC5402) (Macrococcoides caseolyticum).